The following is a 151-amino-acid chain: Large ribosomal subunit protein eL8 (151 aa).

This sequence belongs to the eukaryotic ribosomal protein eL8 family. As to quaternary structure, part of the 50S ribosomal subunit. Probably part of the RNase P complex.

Its subcellular location is the cytoplasm. Multifunctional RNA-binding protein that recognizes the K-turn motif in ribosomal RNA, the RNA component of RNase P, box H/ACA, box C/D and box C'/D' sRNAs. The sequence is that of Large ribosomal subunit protein eL8 from Pyrobaculum neutrophilum (strain DSM 2338 / JCM 9278 / NBRC 100436 / V24Sta) (Thermoproteus neutrophilus).